The sequence spans 1299 residues: MAAVFGIQLVPKLNTSTTRRTFLPLRFDLLLDRLQSTNLHGVLYRALDFNPVDRSATVIQTYPPLNAWSPHPAFIENPLDYRDWTEFIHDRALAFVGVLTQRYPLTQNAQRYTNPLVLGAAFGDFLNARSIDIFLDRLFYGPTQESPITSITKFPYQWTIDFNVTADSVRTPAGCKYITLYGYDPSRPSTPATYGKHRPTYATVFYYSTLPARSRLLANLAAGPTVLEHFDSPTYGPHLLLPQTGDVLGYSSSLISQAALLMVESVMDALRDNANASASTAVTRLDQSYHPVTSFDPSTFNTLLQRATNLALLAVQGVQSESAIPAIPTMSDVRSFVARLMAEGDPQQWFPYRVDQILYWPESPFVPPIGPFYAPFRPVNFPFTTGSYTVVPDASRPLRLLPQYRNATITVQQADDAYEDTALSPLITTHGFCVTGGVSTSIYDISGDPTAYPPAQLVDTPNDYFDRERMARRDLFRRLRAPADRSAIKDRAVFDFLASLVNPTTANPVLDTSFSMAYLGASSAHANADEPVILADIRSGSIPGLPIPRRIVQFGYDVVHGSLLDLSRAVPTGTFGLVYADLDQVEDAGTDMPAANRAAIAMLGTALQMTTAGGVSVLKVNFPTRAFWTQVFNLYATHATTLHLVKPTIVNSSEVFLVFGGRQSNGALRSTTALQRALLSLYARNAAIDRAVTHIPFFGVPDDGTSDLGIDAVRLFDPMFSDAVANLPSNALASLVSRVVPSSIMFTRVPSNGPVSTTIYGKRTFLSNRRRARLRDVPMLITTTLVHQRRFTTPPTFTLFSSEAVPVTTLVAAGYNSFISEQTRNPNLAHLLDLGTGPECRILSLIPPTLQVTMSDARPCAELMASFDPALTAYVQGDYSTAAFWNGIRCDSATAIFTLGAAAAAAGTDLIAFVQQLIPRIVAAGGTRMWLQLNTPLYEVSSLPDLIDIDLRDRVYRFNGGERVEPYADPVPLQQAIAALLPAAALSWHTLSPTCDWLPYIIGVGSPLNLSDINTAISYSRLTPILHIDTTTPPLRVNPVPTPLNQQCAIRITSLDPAAVLSVQHNGVEVIGGTPGNVISVAGAAALQYILANQEFLLQFTPTLPGIFDVFLTTLGQPPVPRGSFTITPPPTTVVLNMPPPGQLDFTDVGNDARITCDPYYQLAVCIFKDGQYVRVNPEKASVVTNAPNRDLHFVLDLADNHVLLYLCDVTPSGLGDRIAFPIVDIYRIAFPRNTPVRASLPYTGGGAHLTSGGNPFMSLTTPPAVLPAGVALAALSTSVATQYPTYTLPAGVYEYVIE.

Belongs to the aquareoviridae outer capsid VP1 protein family.

The protein localises to the virion. The catalysed reaction is a 5'-end diphospho-ribonucleoside in mRNA + GTP + H(+) = a 5'-end (5'-triphosphoguanosine)-ribonucleoside in mRNA + diphosphate. The enzyme catalyses a 5'-end (5'-triphosphoguanosine)-ribonucleoside in mRNA + S-adenosyl-L-methionine = a 5'-end (N(7)-methyl 5'-triphosphoguanosine)-ribonucleoside in mRNA + S-adenosyl-L-homocysteine. Functionally, outer capsid protein involved in mRNA capping. Catalyzes the last 3 enzymatic activities for formation of the 5' cap structure on the viral plus-strand transcripts, namely the RNA guanylyltransferase, RNA-7N- and RNA-2'O-methyltransferase activities. The sequence is that of Outer capsid protein VP1 (S1) from Aquareovirus C (isolate Golden shiner/USA/GSRV/1977) (AQRV-C).